We begin with the raw amino-acid sequence, 343 residues long: Cell cycle control protein 50C (343 aa).

Over 1–34 (MKRKCQDYESRLPDNTAVKQQQLPAFRLQLTASE) the chain is Cytoplasmic. A helical membrane pass occupies residues 35 to 55 (ILSGFFAIGLFCLGMGIILLL). Residues 56–306 (SAKSIKEVEI…STLTWSGGSS (251 aa)) are Extracellular-facing. N66, N164, N205, and N265 each carry an N-linked (GlcNAc...) asparagine glycan. The chain crosses the membrane as a helical span at residues 307–327 (LFLALAYLVTGAVTLLASFSM). Residues 328 to 343 (MALHLKLKERKTFFLQ) are Cytoplasmic-facing.

It belongs to the CDC50/LEM3 family.

Its subcellular location is the membrane. The protein is Cell cycle control protein 50C (TMEM30C) of Bos taurus (Bovine).